The sequence spans 412 residues: 43 kDa receptor-associated protein of the synapse (412 aa).

G2 carries the N-myristoyl glycine lipid modification. TPR repeat units lie at residues T6–L39, L83–R116, G123–N156, C163–Y196, A206–H239, A246–I279, and V286–V319. Y196 carries the post-translational modification Phosphotyrosine. Residues C363 to R403 form an RING-type zinc finger. Residue S405 is modified to Phosphoserine.

The protein belongs to the RAPsyn family. Ubiquitinated by the BCR(KLHL8) complex, leading to its degradation.

The protein localises to the cell membrane. It is found in the postsynaptic cell membrane. Its subcellular location is the cytoplasm. It localises to the cytoskeleton. Postsynaptic protein required for clustering of nicotinic acetylcholine receptors (nAChRs) at the neuromuscular junction. It may link the receptor to the underlying postsynaptic cytoskeleton, possibly by direct association with actin or spectrin. In Homo sapiens (Human), this protein is 43 kDa receptor-associated protein of the synapse (RAPSN).